A 421-amino-acid chain; its full sequence is UPF0415 protein C7orf25 (421 aa).

This sequence belongs to the UPF0415 family.

In Homo sapiens (Human), this protein is UPF0415 protein C7orf25 (C7orf25).